Consider the following 272-residue polypeptide: Shikimate dehydrogenase (NADP(+)) (272 aa).

Shikimate is bound by residues serine 14 to serine 16 and threonine 61. The active-site Proton acceptor is the lysine 65. NADP(+) is bound at residue glutamate 77. Shikimate-binding residues include asparagine 86 and aspartate 102. NADP(+)-binding positions include glycine 126 to alanine 130, asparagine 149 to arginine 154, and methionine 213. Residue tyrosine 215 coordinates shikimate. Glycine 237 is a binding site for NADP(+).

Belongs to the shikimate dehydrogenase family. Homodimer.

The enzyme catalyses shikimate + NADP(+) = 3-dehydroshikimate + NADPH + H(+). It functions in the pathway metabolic intermediate biosynthesis; chorismate biosynthesis; chorismate from D-erythrose 4-phosphate and phosphoenolpyruvate: step 4/7. Functionally, involved in the biosynthesis of the chorismate, which leads to the biosynthesis of aromatic amino acids. Catalyzes the reversible NADPH linked reduction of 3-dehydroshikimate (DHSA) to yield shikimate (SA). In Salmonella heidelberg (strain SL476), this protein is Shikimate dehydrogenase (NADP(+)).